The chain runs to 158 residues: MRKAKPKKRVILPDPVFNDQKVSKFVNHLMYDGKKNTSYEIFYAALETVKAKLPNEEKTALEIWKKALDNVTPQVEVKSRRVGGATFQVPTEIRPDRKESISMKNLILFARKRGGKSMADKLAAEIMDAFNEQGGAFKRKEDMHRMAEANRAFAHFRF.

Belongs to the universal ribosomal protein uS7 family. As to quaternary structure, part of the 30S ribosomal subunit. Contacts proteins S9 and S11.

Functionally, one of the primary rRNA binding proteins, it binds directly to 16S rRNA where it nucleates assembly of the head domain of the 30S subunit. Is located at the subunit interface close to the decoding center, probably blocks exit of the E-site tRNA. The polypeptide is Small ribosomal subunit protein uS7 (Bacteroides fragilis (strain YCH46)).